Reading from the N-terminus, the 116-residue chain is Methionine-R-sulfoxide reductase B1 (116 aa).

A MsrB domain is found at 1-106 (MSFCSFFGGE…FSSSLKFVPK (106 aa)). Zn(2+) is bound by residues C23, C26, C71, and C74. The Nucleophile role is filled by U95. Residue U95 is a non-standard amino acid, selenocysteine.

It belongs to the MsrB Met sulfoxide reductase family. Requires Zn(2+) as cofactor. Truncated MSRB1/SEPX1 proteins produced by failed UGA/Sec decoding are ubiquitinated by the CRL2(FEM1C) E3 ubiquitin-protein ligase complex.

It localises to the cytoplasm. The protein resides in the nucleus. The protein localises to the cytoskeleton. It catalyses the reaction L-methionyl-[protein] + [thioredoxin]-disulfide + H2O = L-methionyl-(R)-S-oxide-[protein] + [thioredoxin]-dithiol. The catalysed reaction is [thioredoxin]-disulfide + L-methionine + H2O = L-methionine (R)-S-oxide + [thioredoxin]-dithiol. Its function is as follows. Methionine-sulfoxide reductase that specifically reduces methionine (R)-sulfoxide back to methionine. While in many cases, methionine oxidation is the result of random oxidation following oxidative stress, methionine oxidation is also a post-translational modification that takes place on specific residue. Acts as a regulator of actin assembly by reducing methionine (R)-sulfoxide mediated by MICALs (MICAL1, MICAL2 or MICAL3) on actin, thereby promoting filament repolymerization. Plays a role in innate immunity by reducing oxidized actin, leading to actin repolymerization in macrophages. The sequence is that of Methionine-R-sulfoxide reductase B1 (Msrb1) from Mus musculus (Mouse).